A 249-amino-acid polypeptide reads, in one-letter code: Transcription factor MYB90 (249 aa).

HTH myb-type domains are found at residues 5–57 and 58–112; these read SKGL…LNYL and KPSI…SKKH. 2 DNA-binding regions (H-T-H motif) span residues 33–57 and 85–108; these read WHQV…LNYL and WSLI…NTHL.

Interacts with BHLH12/MYC1, BHLH1/GL3/MYC6, BHLH2/EGL3/MYC146, and BHLH42/TT8. In terms of tissue distribution, expressed only in leaves and siliques.

Its subcellular location is the nucleus. Its function is as follows. Transcription activator, when associated with BHLH12/MYC1, EGL3, or GL3. Promotes the synthesis of phenylpropanoid-derived compounds such as anthocyanins. The polypeptide is Transcription factor MYB90 (MYB90) (Arabidopsis thaliana (Mouse-ear cress)).